We begin with the raw amino-acid sequence, 475 residues long: MACSLKDELLCSICLSIYQDPVSLGCEHYFCRRCITEHWVRQEAQGARDCPECRRTFAEPALAPSLKLANIVERYSSFPLDAILNARRAARPCQAHDKVKLFCLTDRALLCFFCDEPALHEQHQVTGIDDAFDELQRELKDQLQALQDSEREHTEALQLLKRQLAETKSSTKSLRTTIGEAFERLHRLLRERQKAMLEELEADTARTLTDIEQKVQRYSQQLRKVQEGAQILQERLAETDRHTFLAGVASLSERLKGKIHETNLTYEDFPTSKYTGPLQYTIWKSLFQDIHPVPAALTLDPGTAHQRLILSDDCTIVAYGNLHPQPLQDSPKRFDVEVSVLGSEAFSSGVHYWEVVVAEKTQWVIGLAHEAASRKGSIQIQPSRGFYCIVMHDGNQYSACTEPWTRLNVRDKLDKVGVFLDYDQGLLIFYNADDMSWLYTFREKFPGKLCSYFSPGQSHANGKNVQPLRINTVRI.

An RING-type zinc finger spans residues 11–54 (CSICLSIYQDPVSLGCEHYFCRRCITEHWVRQEAQGARDCPECR). The B box-type zinc-finger motif lies at 88-128 (RAARPCQAHDKVKLFCLTDRALLCFFCDEPALHEQHQVTGI). Zn(2+) is bound by residues cysteine 93, histidine 96, cysteine 114, and histidine 120. The stretch at 127–241 (GIDDAFDELQ…LQERLAETDR (115 aa)) forms a coiled coil. A B30.2/SPRY domain is found at 277–475 (PLQYTIWKSL…QPLRINTVRI (199 aa)).

It belongs to the TRIM/RBCC family. In terms of assembly, interacts with the ubiquitin-conjugating enzyme, UBE2D2. Polyubiquitinated, autoubiquitinated in the presence of UBE2D2.

The protein localises to the cytoplasm. The catalysed reaction is S-ubiquitinyl-[E2 ubiquitin-conjugating enzyme]-L-cysteine + [acceptor protein]-L-lysine = [E2 ubiquitin-conjugating enzyme]-L-cysteine + N(6)-ubiquitinyl-[acceptor protein]-L-lysine.. The protein operates within protein modification; protein ubiquitination. Its function is as follows. E3 ubiquitin ligase that plays a role in antifungal immunity by mediating 'Lys-27'-linked ubiquitination of CARD9 downstream of C-type lectin receptors; leading to CARD9 activation, followed by activation of NF-kappa-B and MAP kinase p38 pathways. E3 ubiquitin ligase activity is dependent on E2 ubiquitin-conjugating enzyme UBE2D2. The chain is E3 ubiquitin-protein ligase TRIM62 from Homo sapiens (Human).